Reading from the N-terminus, the 217-residue chain is MSIGILGKKLGMSQLFDDKGNSVPVTLIEAGPCRVTQLKTTALDGYTAVQIGYGLSKEKHLSKPEKGHLLKSGEELLKHLKEYRVEETSSYEIGKQITVKNFEVGQKVDISGKSMGRGFAGYQKRHGFSRGPMSHGSKNHRAPGSTGAGTTPGRIYPGKRMAGRYGGKQITTKGLLVLKIDDQKNLLVVKGSVPGKPGSIINIKPNNVVGKKGGEKS.

A disordered region spans residues 127–162 (GFSRGPMSHGSKNHRAPGSTGAGTTPGRIYPGKRMA). Positions 142–153 (APGSTGAGTTPG) are enriched in low complexity.

It belongs to the universal ribosomal protein uL3 family. Part of the 50S ribosomal subunit. Forms a cluster with proteins L14 and L19.

In terms of biological role, one of the primary rRNA binding proteins, it binds directly near the 3'-end of the 23S rRNA, where it nucleates assembly of the 50S subunit. The polypeptide is Large ribosomal subunit protein uL3 (Prochlorococcus marinus (strain AS9601)).